The chain runs to 447 residues: Signal recognition particle 54 kDa protein (447 aa).

Residues 108–115 (GLYGMGKT), 188–192 (DTAGR), and 246–249 (TKLD) contribute to the GTP site.

Belongs to the GTP-binding SRP family. SRP54 subfamily. In terms of assembly, part of the signal recognition particle protein translocation system, which is composed of SRP and FtsY. Archaeal SRP consists of a 7S RNA molecule of 300 nucleotides and two protein subunits: SRP54 and SRP19.

It localises to the cytoplasm. It catalyses the reaction GTP + H2O = GDP + phosphate + H(+). Functionally, involved in targeting and insertion of nascent membrane proteins into the cytoplasmic membrane. Binds to the hydrophobic signal sequence of the ribosome-nascent chain (RNC) as it emerges from the ribosomes. The SRP-RNC complex is then targeted to the cytoplasmic membrane where it interacts with the SRP receptor FtsY. The protein is Signal recognition particle 54 kDa protein of Methanopyrus kandleri (strain AV19 / DSM 6324 / JCM 9639 / NBRC 100938).